A 138-amino-acid polypeptide reads, in one-letter code: Ribosomal RNA large subunit methyltransferase H (138 aa).

S-adenosyl-L-methionine is bound by residues glycine 86 and 105 to 110 (LSPLTF).

This sequence belongs to the RNA methyltransferase RlmH family. In terms of assembly, homodimer.

It localises to the cytoplasm. It catalyses the reaction pseudouridine(1915) in 23S rRNA + S-adenosyl-L-methionine = N(3)-methylpseudouridine(1915) in 23S rRNA + S-adenosyl-L-homocysteine + H(+). Functionally, specifically methylates the pseudouridine at position 1915 (m3Psi1915) in 23S rRNA. This Prochlorococcus marinus (strain MIT 9215) protein is Ribosomal RNA large subunit methyltransferase H.